We begin with the raw amino-acid sequence, 225 residues long: Probable septum site-determining protein MinC (225 aa).

It belongs to the MinC family. As to quaternary structure, interacts with MinD and FtsZ.

Functionally, cell division inhibitor that blocks the formation of polar Z ring septums. Rapidly oscillates between the poles of the cell to destabilize FtsZ filaments that have formed before they mature into polar Z rings. Prevents FtsZ polymerization. The polypeptide is Probable septum site-determining protein MinC (Listeria monocytogenes serotype 4b (strain CLIP80459)).